A 427-amino-acid chain; its full sequence is MESWPWPSGGAWLLVAARALLQLLRADLRLGRPLLAALALLAALDWLCQRLLPPLAALAVLAATGWIVLSRLARPQRLPVATRAVLITGCDSGFGNATAKKLDAMGFTVLATVLDLNSPGALELRACCSSRLQLLQMDLTKPADISRVLEFTKVHTASTGLWGLVNNAGQNIFVADAELCPVATFRTCMEVNFFGALEMTKGLLPLLRRSSGRIVTVSSPAGDMPFPCLAAYGTSKAALALLMGNFSCELLPWGVKVSIILPACFKTESVKDVHQWEERKQQLLATLPQELLQAYGEDYIEHLNGQFLHSLSQALPDLSPVVDAITDALLAAQPRRRYYPGHGLGLIYFIHYYLPEGCGRVSCSPSSSVPMCQEHYRLPAWPYLCPGHSPGPRPQTGPLSHCPVSRAHVEQLQQRRFLVPLLFFQVF.

82–111 contributes to the NAD(+) binding site; the sequence is TRAVLITGCDSGFGNATAKKLDAMGFTVLA. Substrate is bound at residue Ser219. The Proton acceptor role is filled by Tyr232.

The protein belongs to the short-chain dehydrogenases/reductases (SDR) family. Interacts with ligand-free cytoplasmic NR3C2. In terms of tissue distribution, highly expressed in the kidney and adrenal and at lower levels in the colon.

Its subcellular location is the microsome. The protein localises to the endoplasmic reticulum. It catalyses the reaction an 11beta-hydroxysteroid + NAD(+) = an 11-oxosteroid + NADH + H(+). The enzyme catalyses corticosterone + NAD(+) = 11-dehydrocorticosterone + NADH + H(+). The catalysed reaction is cortisol + NAD(+) = cortisone + NADH + H(+). It carries out the reaction 11beta,17beta-dihydroxyandrost-4-ene-3-one + NAD(+) = 17beta-hydroxyandrost-4-ene-3,11-dione + NADH + H(+). It catalyses the reaction 11beta-hydroxyandrost-4-ene-3,17-dione + NAD(+) = androst-4-ene-3,11,17-trione + NADH + H(+). It participates in steroid metabolism. Its activity is regulated as follows. Inhibited by glycyrrhetinic acid, carbenoloxone, 11-alpha-OH-progesterone and 11-beta-OH-progesterone. Its function is as follows. Catalyzes the conversion of biologically active 11beta-hydroxyglucocorticoids (11beta-hydroxysteroid) such as cortisol, to inactive 11-ketoglucocorticoids (11-oxosteroid) such as cortisone, in the presence of NAD(+). Functions as a dehydrogenase (oxidase), thereby decreasing the concentration of active glucocorticoids, thus protecting the nonselective mineralocorticoid receptor from occupation by glucocorticoids. Plays an important role in maintaining glucocorticoids balance during preimplantation and protects the fetus from excessive maternal corticosterone exposure. Catalyzes the oxidation of 11beta-hydroxytestosterone (11beta,17beta-dihydroxyandrost-4-ene-3-one) to 11-ketotestosterone (17beta-hydroxyandrost-4-ene-3,11-dione), a major bioactive androgen. Catalyzes the conversion of 11beta-hydroxyandrostenedione (11beta-hydroxyandrost-4-ene-3,17-dione) to 11-ketoandrostenedione (androst-4-ene-3,11,17-trione), which can be further metabolized to 11-ketotestosterone. Converts 7-beta-25-dihydroxycholesterol to 7-oxo-25-hydroxycholesterol in vitro. 7-beta-25-dihydroxycholesterol (not 7-oxo-25-hydroxycholesterol) acts as a ligand for the G-protein-coupled receptor (GPCR) Epstein-Barr virus-induced gene 2 (EBI2) and may thereby regulate immune cell migration. May protect ovulating oocytes and fertilizing spermatozoa from the adverse effects of cortisol. In Ovis aries (Sheep), this protein is 11-beta-hydroxysteroid dehydrogenase type 2 (HSD11B2).